Here is a 431-residue protein sequence, read N- to C-terminus: Glucose-1-phosphate adenylyltransferase (431 aa).

Position 39 (K39) interacts with beta-D-fructose 1,6-bisphosphate. AMP-binding residues include R40, H46, and R52. Position 114 (Y114) interacts with alpha-D-glucose 1-phosphate. R130 provides a ligand contact to AMP. Alpha-D-glucose 1-phosphate contacts are provided by residues G179, 194–195 (EK), and S212. E370 and R386 together coordinate AMP. Residues 419–423 (REMLR) and 429–431 (QER) contribute to the beta-D-fructose 1,6-bisphosphate site.

The protein belongs to the bacterial/plant glucose-1-phosphate adenylyltransferase family. In terms of assembly, homotetramer.

It catalyses the reaction alpha-D-glucose 1-phosphate + ATP + H(+) = ADP-alpha-D-glucose + diphosphate. It functions in the pathway glycan biosynthesis; glycogen biosynthesis. Its activity is regulated as follows. Allosterically activated by fructose-1,6-bisphosphate (F16BP) and inhibited by AMP. Involved in the biosynthesis of ADP-glucose, a building block required for the elongation reactions to produce glycogen. Catalyzes the reaction between ATP and alpha-D-glucose 1-phosphate (G1P) to produce pyrophosphate and ADP-Glc. In Escherichia coli O127:H6 (strain E2348/69 / EPEC), this protein is Glucose-1-phosphate adenylyltransferase.